We begin with the raw amino-acid sequence, 183 residues long: Neuronal synaptobrevin (183 aa).

The span at 1–17 (MADAAPAGDAPPNAGAP) shows a compositional bias: low complexity. The tract at residues 1 to 32 (MADAAPAGDAPPNAGAPAGEGGDGEIVGGPHN) is disordered. Topologically, residues 1–106 (MADAAPAGDA…KFWLQNLKMM (106 aa)) are cytoplasmic. Residues 18-27 (AGEGGDGEIV) show a composition bias toward gly residues. One can recognise a v-SNARE coiled-coil homology domain in the interval 41-101 (RLQQTQAQVD…GKLKRKFWLQ (61 aa)). Residues 107–127 (IIMGVIGLVVVGIIANKLGLI) form a helical membrane-spanning segment. At 128–183 (GGEQPPQYQYPPQYMQPPPPPPQQPAGGQSSLVDAAGAGDGAGAGGSAGAGDHGGV) the chain is on the vesicular side. The disordered stretch occupies residues 135-183 (YQYPPQYMQPPPPPPQQPAGGQSSLVDAAGAGDGAGAGGSAGAGDHGGV). The segment covering 141–151 (YMQPPPPPPQQ) has biased composition (pro residues). Over residues 165–183 (AGDGAGAGGSAGAGDHGGV) the composition is skewed to gly residues.

Belongs to the synaptobrevin family. In terms of assembly, part of the SNARE core complex containing Snap25 and syntaxin. Specifically expressed in neurons and synapses.

The protein localises to the cytoplasmic vesicle. Its subcellular location is the secretory vesicle. It is found in the synaptic vesicle membrane. It localises to the early endosome membrane. Its function is as follows. Involved in the targeting and/or fusion of transport vesicles to their target membrane. Major SNARE protein of synaptic vesicles which mediates fusion of synaptic vesicles to release neurotransmitters. Essential for fast vesicular exocytosis and activity-dependent neurotransmitter release as well as fast endocytosis that mediates rapid reuse of synaptic vesicles. Also involved in a neuron-specific sort-and-degrade mechanism that promotes endolysosomal degradation and is required for neuronal maintenance. In Drosophila melanogaster (Fruit fly), this protein is Neuronal synaptobrevin.